A 234-amino-acid polypeptide reads, in one-letter code: Viral Fc-gamma receptor-like protein IR11 (234 aa).

The N-terminal stretch at 1 to 23 is a signal peptide; that stretch reads MQTYSTPLTLVIVTSLFLFTTQG. Residues 24–122 form the Ig-like V-type domain; sequence SSSNAVEPTK…VKDTGVYLLQ (99 aa). Topologically, residues 24-182 are extracellular; the sequence is SSSNAVEPTK…DLKRQWSGLS (159 aa). N-linked (GlcNAc...) asparagine; by host glycans are attached at residues Asn-57, Asn-105, and Asn-110. A helical transmembrane segment spans residues 183–203; that stretch reads LHCAWVSGMMIFVGALVICFL. At 204–234 the chain is on the cytoplasmic side; it reads RSQRIGEQDAEHLRTDLDTEPLLLTVDGDLQ.

Belongs to the RL11 family.

The protein localises to the membrane. This Homo sapiens (Human) protein is Viral Fc-gamma receptor-like protein IR11.